The chain runs to 352 residues: tRNA pseudouridine synthase D (352 aa).

D81 functions as the Nucleophile in the catalytic mechanism. The TRUD domain maps to 157-303 (GIPNYFGAQR…MSHERRILRL (147 aa)).

This sequence belongs to the pseudouridine synthase TruD family.

The catalysed reaction is uridine(13) in tRNA = pseudouridine(13) in tRNA. In terms of biological role, responsible for synthesis of pseudouridine from uracil-13 in transfer RNAs. This chain is tRNA pseudouridine synthase D, found in Pseudomonas fluorescens (strain Pf0-1).